A 355-amino-acid chain; its full sequence is Probable sugar phosphate/phosphate translocator At3g10290 (355 aa).

Positions Q19–P51 are disordered. Polar residues predominate over residues Q22 to K32. A run of 10 helical transmembrane segments spans residues T55–L75, I89–F109, F124–S144, V150–I170, A177–G197, E198–F218, L239–E259, Y277–V297, T305–F325, and P328–G348.

The protein belongs to the TPT transporter family. TPT (TC 2.A.7.9) subfamily.

The protein resides in the membrane. This chain is Probable sugar phosphate/phosphate translocator At3g10290, found in Arabidopsis thaliana (Mouse-ear cress).